Consider the following 961-residue polypeptide: Mitogen-activated protein kinase kinase kinase 13-A (961 aa).

Residues 88 to 118 (LRDQDEPENTAPQGSSHSGDGGSYSGNEDIR) form a disordered region. The Protein kinase domain occupies 169-410 (ISELQWLGSG…FRQILMHLDI (242 aa)). ATP contacts are provided by residues 175 to 183 (LGSGAQGAV) and Lys196. Asp280 serves as the catalytic Proton acceptor. 2 leucine-zipper regions span residues 434–455 (VKKH…DEEL) and 487–508 (LSAI…EQAV). Residues 458–497 (RRREELRHALDIREHYERKLERANNLYMELSAIMLQLEVR) are a coiled coil. Disordered stretches follow at residues 513–600 (PGTY…SKGS), 615–637 (ALSQ…CSPY), and 799–883 (RRIR…KLDD). A compositionally biased stretch (low complexity) spans 560-578 (SAEGSAASASPISGSPKTS). The segment covering 584 to 596 (NRYRSKPRHRRVN) has biased composition (basic residues). Residues 810-823 (ESSEEEEGEVDSEV) are compositionally biased toward acidic residues. The interval 811-824 (SSEEEEGEVDSEVE) is acidic. Residues 837 to 851 (KCQSYSTFSSENFSV) are compositionally biased toward polar residues.

The protein belongs to the protein kinase superfamily. Ser/Thr protein kinase family.

The protein localises to the cytoplasm. The protein resides in the membrane. It carries out the reaction L-seryl-[protein] + ATP = O-phospho-L-seryl-[protein] + ADP + H(+). The enzyme catalyses L-threonyl-[protein] + ATP = O-phospho-L-threonyl-[protein] + ADP + H(+). In terms of biological role, may have a role in the JNK signaling pathway. This is Mitogen-activated protein kinase kinase kinase 13-A (map3k13-a) from Xenopus laevis (African clawed frog).